Here is a 769-residue protein sequence, read N- to C-terminus: Cap-specific mRNA (nucleoside-2'-O-)-methyltransferase 2 (769 aa).

Residues Glu-109–Gly-322 form the Adrift-type SAM-dependent 2'-O-MTase domain. The active site involves Lys-117. Residues Gly-148, Trp-167, and Asp-235 each coordinate S-adenosyl-L-methionine. The active site involves Asp-235. Residue Lys-275 is the Proton acceptor of the active site.

The protein resides in the nucleus. It is found in the cytoplasm. The catalysed reaction is a 5'-end (N(7)-methyl 5'-triphosphoguanosine)-(2'-O-methyl-ribonucleoside)-(ribonucleotide) in mRNA + S-adenosyl-L-methionine = a 5'-end (N(7)-methyl 5'-triphosphoguanosine)-(2'-O-methyl-ribonucleoside)-(2'-O-methyl-ribonucleotide) in mRNA + S-adenosyl-L-homocysteine + H(+). S-adenosyl-L-methionine-dependent methyltransferase that mediates mRNA cap2 2'-O-ribose methylation to the 5'-cap structure of mRNAs. Methylates the ribose of the second nucleotide of a m(7)GpppG-capped mRNA and small nuclear RNA (snRNA) (cap0) to produce m(7)GpppRmpNm (cap2). Recognizes a guanosine cap on RNA independently of its N(7) methylation status. Display cap2 methylation on both cap0 and cap1. Displays a preference for cap1 RNAs. The protein is Cap-specific mRNA (nucleoside-2'-O-)-methyltransferase 2 (CMTR2) of Pongo abelii (Sumatran orangutan).